The following is a 465-amino-acid chain: Cysteine--tRNA ligase (465 aa).

A Zn(2+)-binding site is contributed by cysteine 27. Positions 29–39 (PTTYNYIHIGN) match the 'HIGH' region motif. Positions 207, 232, and 236 each coordinate Zn(2+). A 'KMSKS' region motif is present at residues 264–268 (KMSKS). Residue lysine 267 coordinates ATP.

This sequence belongs to the class-I aminoacyl-tRNA synthetase family. In terms of assembly, monomer. Zn(2+) serves as cofactor.

It localises to the cytoplasm. The enzyme catalyses tRNA(Cys) + L-cysteine + ATP = L-cysteinyl-tRNA(Cys) + AMP + diphosphate. In Carboxydothermus hydrogenoformans (strain ATCC BAA-161 / DSM 6008 / Z-2901), this protein is Cysteine--tRNA ligase.